The following is a 123-amino-acid chain: Small ribosomal subunit protein uS12 (123 aa).

Residues 1 to 22 (MATINQLVRQPRKRSVEKSDVP) form a disordered region. Aspartate 89 is subject to 3-methylthioaspartic acid. A disordered region spans residues 100 to 123 (GSLDTSGVKGRNQGRSKYGTKRPK). Basic residues predominate over residues 111–123 (NQGRSKYGTKRPK).

It belongs to the universal ribosomal protein uS12 family. In terms of assembly, part of the 30S ribosomal subunit. Contacts proteins S8 and S17. May interact with IF1 in the 30S initiation complex.

Its function is as follows. With S4 and S5 plays an important role in translational accuracy. Functionally, interacts with and stabilizes bases of the 16S rRNA that are involved in tRNA selection in the A site and with the mRNA backbone. Located at the interface of the 30S and 50S subunits, it traverses the body of the 30S subunit contacting proteins on the other side and probably holding the rRNA structure together. The combined cluster of proteins S8, S12 and S17 appears to hold together the shoulder and platform of the 30S subunit. The protein is Small ribosomal subunit protein uS12 of Pseudomonas putida (strain GB-1).